Consider the following 439-residue polypeptide: MAGAMVSIVGRPNVGKSTLFNKIMGKRISIVEDKPGVTRDRIYGNVEWLDKKFILVDTGGLDPNAEDILFSKVRLQVEAAIDASDVILFLVDAKEGLMPEDEEIANILRRAKKEVILVCNKVDSFKEMPPTYYDFFSLGLGNPIPISASNGLGIGELLDEVVKKLPQEELEYTEETIKIAVIGKPNVGKSSLVNKILGEERVIVSNIPGTTRDAIDTPFSKDGKNYVLIDTAGIRRKSRISESIERYSVLRALAAIERSDICLLMIDATEGPTEQDTKIAGYAFENGKGIIIVVNKWDAIKKDNNTVNEYTKMVREKLSFISFAPILFISAKTGQRVHRVLETVDKVWEEYNKRITTGLLNNVLNEAMLMFPPPADKGKPLKVYYTSQVGIKPPSFVVFVNEPELMHFSYLRFIENTLRQNFGFEGVPVVISTRKRGEN.

EngA-type G domains are found at residues 4 to 169 and 177 to 352; these read AMVS…PQEE and IKIA…EEYN. GTP is bound by residues 10–17, 57–61, 120–123, 183–190, 230–234, and 295–298; these read GRPNVGKS, DTGGL, NKVD, GKPNVGKS, DTAGI, and NKWD. Residues 353 to 437 enclose the KH-like domain; sequence KRITTGLLNN…PVVISTRKRG (85 aa).

It belongs to the TRAFAC class TrmE-Era-EngA-EngB-Septin-like GTPase superfamily. EngA (Der) GTPase family. Associates with the 50S ribosomal subunit.

GTPase that plays an essential role in the late steps of ribosome biogenesis. This Thermoanaerobacter pseudethanolicus (strain ATCC 33223 / 39E) (Clostridium thermohydrosulfuricum) protein is GTPase Der.